The following is a 209-amino-acid chain: Small ribosomal subunit protein uS5 (209 aa).

The 64-residue stretch at 48–111 folds into the S5 DRBM domain; sequence LEDEVLDINM…DAAKLNITYI (64 aa).

The protein belongs to the universal ribosomal protein uS5 family. Part of the 30S ribosomal subunit. Contacts protein S4.

Functionally, with S4 and S12 plays an important role in translational accuracy. In Methanosarcina mazei (strain ATCC BAA-159 / DSM 3647 / Goe1 / Go1 / JCM 11833 / OCM 88) (Methanosarcina frisia), this protein is Small ribosomal subunit protein uS5.